Consider the following 63-residue polypeptide: Cytochrome c oxidase subunit 7C, mitochondrial (63 aa).

Residues 1–16 (MLGQSIRRFTTSVVRR) constitute a mitochondrion transit peptide. Residues 17 to 34 (SHYEEGPGKNLPFSVENK) lie on the Mitochondrial matrix side of the membrane. Lysine 25 carries the N6-acetyllysine; alternate modification. Lysine 25 carries the post-translational modification N6-succinyllysine; alternate. A helical membrane pass occupies residues 35 to 57 (WRLLAMMTVYFGSGFAAPFFIVR). The Mitochondrial intermembrane portion of the chain corresponds to 58-63 (HQLLKK).

This sequence belongs to the cytochrome c oxidase VIIc family. Component of the cytochrome c oxidase (complex IV, CIV), a multisubunit enzyme composed of 14 subunits. The complex is composed of a catalytic core of 3 subunits MT-CO1, MT-CO2 and MT-CO3, encoded in the mitochondrial DNA, and 11 supernumerary subunits COX4I, COX5A, COX5B, COX6A, COX6B, COX6C, COX7A, COX7B, COX7C, COX8 and NDUFA4, which are encoded in the nuclear genome. The complex exists as a monomer or a dimer and forms supercomplexes (SCs) in the inner mitochondrial membrane with NADH-ubiquinone oxidoreductase (complex I, CI) and ubiquinol-cytochrome c oxidoreductase (cytochrome b-c1 complex, complex III, CIII), resulting in different assemblies (supercomplex SCI(1)III(2)IV(1) and megacomplex MCI(2)III(2)IV(2)). Interacts with RAB5IF.

Its subcellular location is the mitochondrion inner membrane. It participates in energy metabolism; oxidative phosphorylation. Functionally, component of the cytochrome c oxidase, the last enzyme in the mitochondrial electron transport chain which drives oxidative phosphorylation. The respiratory chain contains 3 multisubunit complexes succinate dehydrogenase (complex II, CII), ubiquinol-cytochrome c oxidoreductase (cytochrome b-c1 complex, complex III, CIII) and cytochrome c oxidase (complex IV, CIV), that cooperate to transfer electrons derived from NADH and succinate to molecular oxygen, creating an electrochemical gradient over the inner membrane that drives transmembrane transport and the ATP synthase. Cytochrome c oxidase is the component of the respiratory chain that catalyzes the reduction of oxygen to water. Electrons originating from reduced cytochrome c in the intermembrane space (IMS) are transferred via the dinuclear copper A center (CU(A)) of subunit 2 and heme A of subunit 1 to the active site in subunit 1, a binuclear center (BNC) formed by heme A3 and copper B (CU(B)). The BNC reduces molecular oxygen to 2 water molecules using 4 electrons from cytochrome c in the IMS and 4 protons from the mitochondrial matrix. This Mus musculus (Mouse) protein is Cytochrome c oxidase subunit 7C, mitochondrial (Cox7c).